A 433-amino-acid chain; its full sequence is Bifunctional protein GlmU (433 aa).

Residues 1 to 226 (MLSVIILAAG…EECFLGVNSQ (226 aa)) form a pyrophosphorylase region. Residues 7–10 (LAAG), lysine 21, and 80–81 (GT) contribute to the UDP-N-acetyl-alpha-D-glucosamine site. Position 106 (aspartate 106) interacts with Mg(2+). UDP-N-acetyl-alpha-D-glucosamine is bound by residues glycine 138, glutamate 152, asparagine 167, and asparagine 224. Asparagine 224 provides a ligand contact to Mg(2+). The linker stretch occupies residues 227 to 247 (TERAKAEEIMLERLRKNAMDL). The interval 248–433 (GVVMQLPNSI…NGYFKFFKKP (186 aa)) is N-acetyltransferase. UDP-N-acetyl-alpha-D-glucosamine-binding residues include arginine 311 and lysine 328. The active-site Proton acceptor is the histidine 339. UDP-N-acetyl-alpha-D-glucosamine contacts are provided by tyrosine 342 and asparagine 353. Acetyl-CoA-binding positions include alanine 356, 362–363 (NY), serine 381, serine 399, and arginine 416.

The protein in the N-terminal section; belongs to the N-acetylglucosamine-1-phosphate uridyltransferase family. This sequence in the C-terminal section; belongs to the transferase hexapeptide repeat family. As to quaternary structure, homotrimer. It depends on Mg(2+) as a cofactor.

The protein resides in the cytoplasm. The enzyme catalyses alpha-D-glucosamine 1-phosphate + acetyl-CoA = N-acetyl-alpha-D-glucosamine 1-phosphate + CoA + H(+). It carries out the reaction N-acetyl-alpha-D-glucosamine 1-phosphate + UTP + H(+) = UDP-N-acetyl-alpha-D-glucosamine + diphosphate. The protein operates within nucleotide-sugar biosynthesis; UDP-N-acetyl-alpha-D-glucosamine biosynthesis; N-acetyl-alpha-D-glucosamine 1-phosphate from alpha-D-glucosamine 6-phosphate (route II): step 2/2. It participates in nucleotide-sugar biosynthesis; UDP-N-acetyl-alpha-D-glucosamine biosynthesis; UDP-N-acetyl-alpha-D-glucosamine from N-acetyl-alpha-D-glucosamine 1-phosphate: step 1/1. It functions in the pathway bacterial outer membrane biogenesis; LPS lipid A biosynthesis. Functionally, catalyzes the last two sequential reactions in the de novo biosynthetic pathway for UDP-N-acetylglucosamine (UDP-GlcNAc). The C-terminal domain catalyzes the transfer of acetyl group from acetyl coenzyme A to glucosamine-1-phosphate (GlcN-1-P) to produce N-acetylglucosamine-1-phosphate (GlcNAc-1-P), which is converted into UDP-GlcNAc by the transfer of uridine 5-monophosphate (from uridine 5-triphosphate), a reaction catalyzed by the N-terminal domain. This Helicobacter pylori (strain ATCC 700392 / 26695) (Campylobacter pylori) protein is Bifunctional protein GlmU.